A 40-amino-acid chain; its full sequence is uncharacterized protein (40 aa).

The span at 1 to 14 (MNRMLSLSVQSQRA) shows a compositional bias: polar residues. Residues 1 to 25 (MNRMLSLSVQSQRAPASPSPYGLKI) are disordered.

This is an uncharacterized protein from Treponema pallidum (strain Nichols).